A 150-amino-acid chain; its full sequence is MRVIIQRVSQASVTVEGQKTADIQKGLLVLVGIEDADTQEDIDWLTGKIIKMRIFGDENDVMNCSVQDVDGDIIVVSQFTLHASTKKGNRPSYIKAAKPDFAIPMYENFVKSLEKEFGKKIQTGIFGADMKVNLLNDGPVTIVMDSKNRE.

The short motif at 138–139 (GP) is the Gly-cisPro motif, important for rejection of L-amino acids element.

Belongs to the DTD family. As to quaternary structure, homodimer.

Its subcellular location is the cytoplasm. The enzyme catalyses glycyl-tRNA(Ala) + H2O = tRNA(Ala) + glycine + H(+). The catalysed reaction is a D-aminoacyl-tRNA + H2O = a tRNA + a D-alpha-amino acid + H(+). In terms of biological role, an aminoacyl-tRNA editing enzyme that deacylates mischarged D-aminoacyl-tRNAs. Also deacylates mischarged glycyl-tRNA(Ala), protecting cells against glycine mischarging by AlaRS. Acts via tRNA-based rather than protein-based catalysis; rejects L-amino acids rather than detecting D-amino acids in the active site. By recycling D-aminoacyl-tRNA to D-amino acids and free tRNA molecules, this enzyme counteracts the toxicity associated with the formation of D-aminoacyl-tRNA entities in vivo and helps enforce protein L-homochirality. This chain is D-aminoacyl-tRNA deacylase, found in Flavobacterium johnsoniae (strain ATCC 17061 / DSM 2064 / JCM 8514 / BCRC 14874 / CCUG 350202 / NBRC 14942 / NCIMB 11054 / UW101) (Cytophaga johnsonae).